The sequence spans 341 residues: MIELKEVVKEYRTKNKEVLAVDHVNLSIRAGSIYGVIGFSGAGKSTLIRMFNHLEAPTSGEVIIDGDHIGQLSKNGLRAKRQKVSMIFQHFNLLWSRTVLKNIMFPLEIAGVPRRRAKQKALELVELVGLKGREKAYPSELSGGQKQRVGIARALANDPTVLLCDEATSALDPQTTDEILDLLLKIREQQNLTIILITHEMHVIRRICDEVAVMESGKVIEHGPVTQVFENPQHAVTKRFVKEDLNDDFETSLTELEPLEKDAYIVRLVFAGSTTTEPIVSSLSTAYDIKINILEANIKNTKNGTVGFLVLHIPYISSIDFGKFEKELIERQVKMEVLRHG.

In terms of domain architecture, ABC transporter spans 2–241; the sequence is IELKEVVKEY…PQHAVTKRFV (240 aa). 38-45 serves as a coordination point for ATP; that stretch reads GFSGAGKS.

It belongs to the ABC transporter superfamily. Methionine importer (TC 3.A.1.24) family. In terms of assembly, the complex is composed of two ATP-binding proteins (MetN), two transmembrane proteins (MetI) and a solute-binding protein (MetQ).

It localises to the cell membrane. The enzyme catalyses L-methionine(out) + ATP + H2O = L-methionine(in) + ADP + phosphate + H(+). It carries out the reaction D-methionine(out) + ATP + H2O = D-methionine(in) + ADP + phosphate + H(+). Functionally, part of the ABC transporter complex MetNIQ involved in methionine import. Responsible for energy coupling to the transport system. In Staphylococcus aureus (strain MRSA252), this protein is Methionine import ATP-binding protein MetN 2.